Here is a 427-residue protein sequence, read N- to C-terminus: 3-phosphoshikimate 1-carboxyvinyltransferase (427 aa).

Residues K22, S23, and R27 each contribute to the 3-phosphoshikimate site. A phosphoenolpyruvate-binding site is contributed by K22. Phosphoenolpyruvate is bound by residues G94 and R122. Residues S165, Q167, D313, and K340 each coordinate 3-phosphoshikimate. Q167 lines the phosphoenolpyruvate pocket. D313 functions as the Proton acceptor in the catalytic mechanism. Residues R344 and R386 each coordinate phosphoenolpyruvate.

It belongs to the EPSP synthase family. As to quaternary structure, monomer.

It localises to the cytoplasm. It catalyses the reaction 3-phosphoshikimate + phosphoenolpyruvate = 5-O-(1-carboxyvinyl)-3-phosphoshikimate + phosphate. The protein operates within metabolic intermediate biosynthesis; chorismate biosynthesis; chorismate from D-erythrose 4-phosphate and phosphoenolpyruvate: step 6/7. In terms of biological role, catalyzes the transfer of the enolpyruvyl moiety of phosphoenolpyruvate (PEP) to the 5-hydroxyl of shikimate-3-phosphate (S3P) to produce enolpyruvyl shikimate-3-phosphate and inorganic phosphate. The polypeptide is 3-phosphoshikimate 1-carboxyvinyltransferase (Koribacter versatilis (strain Ellin345)).